Reading from the N-terminus, the 578-residue chain is Arginine--tRNA ligase (578 aa).

The 'HIGH' region signature appears at 127-137 (PNLAKEMHVGH).

Belongs to the class-I aminoacyl-tRNA synthetase family. Monomer.

Its subcellular location is the cytoplasm. It carries out the reaction tRNA(Arg) + L-arginine + ATP = L-arginyl-tRNA(Arg) + AMP + diphosphate. This is Arginine--tRNA ligase from Pseudomonas syringae pv. tomato (strain ATCC BAA-871 / DC3000).